A 335-amino-acid polypeptide reads, in one-letter code: Methionine import ATP-binding protein MetN (335 aa).

Positions 2 to 241 (IEFQRLHKSY…PKHVTTRRFV (240 aa)) constitute an ABC transporter domain. 38 to 45 (GHSGAGKS) provides a ligand contact to ATP.

The protein belongs to the ABC transporter superfamily. Methionine importer (TC 3.A.1.24) family. The complex is composed of two ATP-binding proteins (MetN), two transmembrane proteins (MetI) and a solute-binding protein (MetQ).

It localises to the cell inner membrane. It carries out the reaction L-methionine(out) + ATP + H2O = L-methionine(in) + ADP + phosphate + H(+). The enzyme catalyses D-methionine(out) + ATP + H2O = D-methionine(in) + ADP + phosphate + H(+). Its function is as follows. Part of the ABC transporter complex MetNIQ involved in methionine import. Responsible for energy coupling to the transport system. This chain is Methionine import ATP-binding protein MetN, found in Xanthomonas oryzae pv. oryzae (strain MAFF 311018).